Reading from the N-terminus, the 322-residue chain is uncharacterized protein (322 aa).

2 disordered regions span residues 1–51 (MARS…GAWA) and 107–130 (QERQNVEGGPEGLHLEPGNEDRPD). Positions 119–130 (LHLEPGNEDRPD) are enriched in basic and acidic residues.

Expressed in skin and fetal lung.

This is an uncharacterized protein from Homo sapiens (Human).